The primary structure comprises 263 residues: Phosphatidylglycerol--prolipoprotein diacylglyceryl transferase (263 aa).

4 helical membrane-spanning segments follow: residues 7–27 (IFSI…LGIV), 50–70 (LLTA…VLIY), 85–105 (TWKG…AVII), and 112–132 (IPIF…LFLG). Arg133 contributes to the a 1,2-diacyl-sn-glycero-3-phospho-(1'-sn-glycerol) binding site. 3 helical membrane passes run 169–189 (LYEA…LFFL), 197–217 (GTLT…VEFF), and 233–253 (MGQL…LSAL).

The protein belongs to the Lgt family.

It is found in the cell membrane. The catalysed reaction is L-cysteinyl-[prolipoprotein] + a 1,2-diacyl-sn-glycero-3-phospho-(1'-sn-glycerol) = an S-1,2-diacyl-sn-glyceryl-L-cysteinyl-[prolipoprotein] + sn-glycerol 1-phosphate + H(+). It participates in protein modification; lipoprotein biosynthesis (diacylglyceryl transfer). Catalyzes the transfer of the diacylglyceryl group from phosphatidylglycerol to the sulfhydryl group of the N-terminal cysteine of a prolipoprotein, the first step in the formation of mature lipoproteins. This chain is Phosphatidylglycerol--prolipoprotein diacylglyceryl transferase, found in Wolbachia sp. subsp. Brugia malayi (strain TRS).